An 84-amino-acid polypeptide reads, in one-letter code: Protein myomixer (84 aa).

Residues 1–4 lie on the Cytoplasmic side of the membrane; that stretch reads MPTP. A helical membrane pass occupies residues 5 to 25; that stretch reads LLPLLLRLLLSCLLLPAARLA. Residues 26–84 are Extracellular-facing; sequence RQYLLPLLRRLARRLGSQDMREALLGCLLFILSQRHSPDAGEASRVDRLERRERLGPQK. The AxLyCxL motif lies at 48-57; it reads ALLGCLLFIL. Positions 62–84 are disordered; the sequence is SPDAGEASRVDRLERRERLGPQK.

Belongs to the MYMX family. As to quaternary structure, interacts with MYMK.

The protein localises to the cell membrane. In terms of biological role, myoblast-specific protein that mediates myoblast fusion, an essential step for the formation of multi-nucleated muscle fibers. Involved in membrane fusion downstream of the lipid mixing step mediated by MYMK. Acts by generating membrane stresses via its extracellular C-terminus, leading to drive fusion pore formation. Acts independently of MYMK. Involved in skeletal muscle regeneration in response to injury by mediating the fusion of satellite cells, a population of muscle stem cells, with injured myofibers. This chain is Protein myomixer, found in Homo sapiens (Human).